We begin with the raw amino-acid sequence, 253 residues long: Nurim homolog (253 aa).

The Nuclear portion of the chain corresponds to methionine 1–threonine 2. The helical transmembrane segment at serine 3–phenylalanine 30 threads the bilayer. Topologically, residues leucine 31–threonine 56 are perinuclear space. A helical transmembrane segment spans residues alanine 57–leucine 78. The Nuclear portion of the chain corresponds to lysine 79–glutamate 96. A helical transmembrane segment spans residues arginine 97 to valine 113. The Perinuclear space portion of the chain corresponds to asparagine 114–alanine 132. A helical membrane pass occupies residues proline 133–leucine 161. The Nuclear segment spans residues leucine 162–leucine 188. A helical membrane pass occupies residues tyrosine 189–threonine 207. Topologically, residues asparagine 208–aspartate 213 are perinuclear space. A helical transmembrane segment spans residues arginine 214–threonine 231. Residues aspartate 232–lysine 253 are Nuclear-facing.

This sequence belongs to the nurim family.

Its subcellular location is the nucleus inner membrane. This Drosophila melanogaster (Fruit fly) protein is Nurim homolog (nrm).